The following is a 786-amino-acid chain: Succinoglycan biosynthesis transport protein ExoP (786 aa).

Topologically, residues 1 to 42 (MNRTAPMKQRSVPLSSIMPSEEQSDGFIDLDRLVAAVFRRAR) are cytoplasmic. Residues 43-66 (LVAAFVVLFIALGAAYLLFATPYY) form a helical membrane-spanning segment. Topologically, residues 67 to 689 (TSMTQILLDE…LIENARNAFD (623 aa)) are periplasmic. Residue 583–590 (ALPDEGKS) coordinates ATP. A helical transmembrane segment spans residues 690 to 711 (YVVVDLAALAPVVDAKAFAPLA). Residues 712–786 (DGILFVVEWG…ENTITENTAA (75 aa)) lie on the Cytoplasmic side of the membrane.

To B.solanacearum EpsB.

The protein localises to the cell membrane. The protein operates within glycan metabolism; exopolysaccharide biosynthesis. In Rhizobium meliloti (strain 1021) (Ensifer meliloti), this protein is Succinoglycan biosynthesis transport protein ExoP (exoP).